Reading from the N-terminus, the 492-residue chain is MDFWLYKQAQQNGHHIAITDGQESYTYQNLYCEASLLAKRLKAYQQSRVGLYIDNSIQSIILIHACWLANIEIAMINTRLTPNEMTNQMRSIDVQLIFCTLPLELRGFQIVSLDDIEFAGTDITTNGLLDNTMGIQYDTSNETVVPKDSPSNILNTSFNLDDIASIMFTSGTTGPQKAVPQTFRNHYASAIGCKESLGFDRDTNWLSVLPIYHISGLSVLLRAVIEGFTVRIVDKFNAEQILTMIKNERITHISLVPQTLNWLMQQGLHEPYDLQKILLGGAKLSASMIETALQYNLPIYNSFGMTETCSQFLTATPEMLHARPDTVGMPSANVDVKIKNPNKKGHGELMIKGANVMNGYLYPTDLTGTFENGYFNTGDIAEIDHEGYVMIYDRRKDLIISGGENIYPYQIETVAKQFPGIIDAVCVGHPDDTWGQVPKLYFVSESNISKAQLIAYLSQHLAKYKVPKHFEKVDTLPYTSTGKLQRNKLYRG.

Belongs to the ATP-dependent AMP-binding enzyme family. MenE subfamily.

The catalysed reaction is 2-succinylbenzoate + ATP + CoA = 2-succinylbenzoyl-CoA + AMP + diphosphate. Its pathway is quinol/quinone metabolism; 1,4-dihydroxy-2-naphthoate biosynthesis; 1,4-dihydroxy-2-naphthoate from chorismate: step 5/7. It functions in the pathway quinol/quinone metabolism; menaquinone biosynthesis. Converts 2-succinylbenzoate (OSB) to 2-succinylbenzoyl-CoA (OSB-CoA). This Staphylococcus aureus (strain MRSA252) protein is 2-succinylbenzoate--CoA ligase.